A 214-amino-acid polypeptide reads, in one-letter code: Mexicain (214 aa).

3 disulfides stabilise this stretch: Cys22–Cys63, Cys56–Cys95, and Cys153–Cys200. Cys25 is an active-site residue. Cys25 is a binding site for E64. Catalysis depends on residues His159 and Asn175.

Belongs to the peptidase C1 family. Expressed in latex.

Its subcellular location is the secreted. Functionally, cysteine protease. This chain is Mexicain, found in Jacaratia mexicana (Wild papaya).